We begin with the raw amino-acid sequence, 600 residues long: UvrABC system protein C (600 aa).

The region spanning 15–100 (NSTGVYQYFN…IKQLHPKYNI (86 aa)) is the GIY-YIG domain. Residues 203–238 (SVLLKNLEKQMLVLAQNENYEEAAKVRDQIAMIKDL) enclose the UVR domain.

This sequence belongs to the UvrC family. Interacts with UvrB in an incision complex.

The protein resides in the cytoplasm. Its function is as follows. The UvrABC repair system catalyzes the recognition and processing of DNA lesions. UvrC both incises the 5' and 3' sides of the lesion. The N-terminal half is responsible for the 3' incision and the C-terminal half is responsible for the 5' incision. The protein is UvrABC system protein C of Campylobacter jejuni subsp. jejuni serotype O:2 (strain ATCC 700819 / NCTC 11168).